The primary structure comprises 537 residues: MMMKISFNTCFQILLGFIVFIASITLLGRIFSRPSKTKDRCRQLPPGRPGWPILGNLPELIMTRPRSKYFHLAMKELKTDIACFNFAGTHTITINSDEIAREAFRERDADLADRPQLSIVESIGDNYKTMGTSSYGEHFMKMKKVITTEIMSVKTLNMLEAARTIEADNLIAYIHSMYQRSETVDVRELSRVYGYAVTMRMLFGRRHVTKENMFSDDGRLGKAEKHHLEVIFNTLNCLPGFSPVDYVDRWLGGWNIDGEEERAKVNVNLVRSYNNPIIDERVEIWREKGGKAAVEDWLDTFITLKDQNGNYLVTPDEIKAQCVEFCIAAIDNPANNMEWTLGEMLKNPEILRKALKELDEVVGKDRLVQESDIRNLNYLKACCRETFRIHPSAHYVPPHVARQDTTLGGYFIPKGSHIHVCRPGLGRNPKIWKDPLAYEPERHLQGDGITKEVTLVETEMRFVSFSTGRRGCVGVKVGTIMMAMMLARFLQGFNWKLHRDFGPLSLEEDDASLLMAKPLLLSVEPRLASNLYPKFRP.

The chain crosses the membrane as a helical span at residues 7–27; that stretch reads FNTCFQILLGFIVFIASITLL.

Belongs to the cytochrome P450 family. Heme serves as cofactor. Highly expressed in hypocotyl and roots. Lower expression in siliques, stems and leaves. Barely detectable in flowers. Expressed only in the vascular bundles in apical plant parts.

Its subcellular location is the endoplasmic reticulum membrane. It carries out the reaction L-hexahomomethionine + 2 reduced [NADPH--hemoprotein reductase] + 2 O2 = (E)-9-(methylsulfanyl)nonanal oxime + 2 oxidized [NADPH--hemoprotein reductase] + CO2 + 3 H2O + 2 H(+). The enzyme catalyses L-pentahomomethionine + 2 reduced [NADPH--hemoprotein reductase] + 2 O2 = (E)-8-(methylsulfanyl)octanal oxime + 2 oxidized [NADPH--hemoprotein reductase] + CO2 + 3 H2O + 2 H(+). It catalyses the reaction an L-polyhomomethionine + 2 reduced [NADPH--hemoprotein reductase] + 2 O2 = an (E)-omega-(methylsulfanyl)-alkanal oxime + 2 oxidized [NADPH--hemoprotein reductase] + CO2 + 3 H2O + 2 H(+). In terms of biological role, catalyzes the conversion of the long chain elongated methionines penta- and hexahomomethionine to their corresponding aldoximes 8-methylthiooctanaldoxime and 9-methylthiononanaldoxime. In Arabidopsis thaliana (Mouse-ear cress), this protein is Hexahomomethionine N-hydroxylase (CYP79F2).